A 293-amino-acid chain; its full sequence is 4-hydroxy-tetrahydrodipicolinate synthase (293 aa).

Threonine 45 is a binding site for pyruvate. Tyrosine 133 acts as the Proton donor/acceptor in catalysis. Residue lysine 161 is the Schiff-base intermediate with substrate of the active site. Position 203 (isoleucine 203) interacts with pyruvate.

Belongs to the DapA family. In terms of assembly, homotetramer; dimer of dimers.

The protein resides in the cytoplasm. It catalyses the reaction L-aspartate 4-semialdehyde + pyruvate = (2S,4S)-4-hydroxy-2,3,4,5-tetrahydrodipicolinate + H2O + H(+). Its pathway is amino-acid biosynthesis; L-lysine biosynthesis via DAP pathway; (S)-tetrahydrodipicolinate from L-aspartate: step 3/4. In terms of biological role, catalyzes the condensation of (S)-aspartate-beta-semialdehyde [(S)-ASA] and pyruvate to 4-hydroxy-tetrahydrodipicolinate (HTPA). This chain is 4-hydroxy-tetrahydrodipicolinate synthase, found in Aliivibrio fischeri (strain MJ11) (Vibrio fischeri).